We begin with the raw amino-acid sequence, 388 residues long: Succinate--CoA ligase [ADP-forming] subunit beta (388 aa).

Positions 9 to 243 (KQLFHRYGIP…ESQLAPLEVR (235 aa)) constitute an ATP-grasp domain. ATP contacts are provided by residues K45, 52–54 (GRG), E98, V101, and E106. 2 residues coordinate Mg(2+): N198 and D212. Substrate-binding positions include N263 and 320–322 (GIM).

The protein belongs to the succinate/malate CoA ligase beta subunit family. In terms of assembly, heterotetramer of two alpha and two beta subunits. Mg(2+) is required as a cofactor.

The catalysed reaction is succinate + ATP + CoA = succinyl-CoA + ADP + phosphate. It carries out the reaction GTP + succinate + CoA = succinyl-CoA + GDP + phosphate. It participates in carbohydrate metabolism; tricarboxylic acid cycle; succinate from succinyl-CoA (ligase route): step 1/1. In terms of biological role, succinyl-CoA synthetase functions in the citric acid cycle (TCA), coupling the hydrolysis of succinyl-CoA to the synthesis of either ATP or GTP and thus represents the only step of substrate-level phosphorylation in the TCA. The beta subunit provides nucleotide specificity of the enzyme and binds the substrate succinate, while the binding sites for coenzyme A and phosphate are found in the alpha subunit. This Syntrophotalea carbinolica (strain DSM 2380 / NBRC 103641 / GraBd1) (Pelobacter carbinolicus) protein is Succinate--CoA ligase [ADP-forming] subunit beta.